Consider the following 251-residue polypeptide: MSQTILEIKDLYASVGETTILKGVNLSIRAGEIHAIMGPNGSGKSTLSKVIAGHPAYSLISGDILFFGQSILEIEPDERAKAGIFLAFQYPVEIPGVSNSDFLRIALNARRKFQGLSEFSPLEFFQLITEKIDLVGMQESFLTRNVNEGFSGGEKKRNEILQMALLDSKISILDETDSGLDIDALRVVAKGINTLAKSTNSIILITHYQRLLDYIIPDFVHIMSNGQIVKTGSVTLAQDLEKHGYDWITQT.

Positions 6-250 (LEIKDLYASV…EKHGYDWITQ (245 aa)) constitute an ABC transporter domain. 38-45 (GPNGSGKS) is a binding site for ATP.

This sequence belongs to the ABC transporter superfamily. Ycf16 family.

It localises to the plastid. It is found in the chloroplast. The chain is Probable ATP-dependent transporter ycf16 (ycf16) from Pyropia yezoensis (Susabi-nori).